Here is a 498-residue protein sequence, read N- to C-terminus: Mitogen-activated protein kinase 15 (498 aa).

Positions 13–304 (YKIEEVIGKG…AEEALADPYF (292 aa)) constitute a Protein kinase domain. ATP-binding positions include 19–27 (IGKGSYGVV) and Lys-42. Asp-139 functions as the Proton acceptor in the catalytic mechanism. Thr-175 is modified (phosphothreonine). The short motif at 175 to 177 (TDY) is the TXY element. At Tyr-177 the chain carries Phosphotyrosine. Disordered regions lie at residues 388-411 (STAAPPERQHNSLPRPSVLYSDDR) and 470-498 (STAEQYEHRRTDRNPALATNTVSPRGSYP). The segment covering 486-498 (LATNTVSPRGSYP) has biased composition (polar residues).

Belongs to the protein kinase superfamily. CMGC Ser/Thr protein kinase family. MAP kinase subfamily. Post-translationally, dually phosphorylated on Thr-175 and Tyr-177, which activates the enzyme.

It catalyses the reaction L-seryl-[protein] + ATP = O-phospho-L-seryl-[protein] + ADP + H(+). The enzyme catalyses L-threonyl-[protein] + ATP = O-phospho-L-threonyl-[protein] + ADP + H(+). Its activity is regulated as follows. Activated by threonine and tyrosine phosphorylation. The chain is Mitogen-activated protein kinase 15 (MPK15) from Oryza sativa subsp. japonica (Rice).